The primary structure comprises 364 residues: uncharacterized protein (364 aa).

Positions 1–17 are enriched in acidic residues; it reads MEPGELMEVDTSQELDE. A disordered region spans residues 1 to 61; it reads MEPGELMEVD…EEDQSSTETM (61 aa). Positions 19-31 are enriched in basic and acidic residues; the sequence is TSAKETDQPKDAQ.

This is an uncharacterized protein from Caenorhabditis elegans.